We begin with the raw amino-acid sequence, 344 residues long: Heat-inducible transcription repressor HrcA (344 aa).

This sequence belongs to the HrcA family.

In terms of biological role, negative regulator of class I heat shock genes (grpE-dnaK-dnaJ and groELS operons). Prevents heat-shock induction of these operons. The polypeptide is Heat-inducible transcription repressor HrcA (Corynebacterium aurimucosum (strain ATCC 700975 / DSM 44827 / CIP 107346 / CN-1) (Corynebacterium nigricans)).